A 300-amino-acid polypeptide reads, in one-letter code: Uricase (300 aa).

Ala-2 bears the N-acetylalanine mark. 2 positions are modified to N6-acetyllysine; alternate: Lys-6 and Lys-19. N6-succinyllysine; alternate is present on residues Lys-6 and Lys-19. Catalysis depends on Lys-19, which acts as the Charge relay system. An N6-acetyllysine mark is found at Lys-23 and Lys-32. Phosphoserine occurs at positions 35 and 59. Thr-64 serves as the catalytic Charge relay system. Positions 64 and 65 each coordinate urate. Lys-114, Lys-118, and Lys-160 each carry N6-acetyllysine. Phe-166 contributes to the urate binding site. 2 positions are modified to N6-acetyllysine: Lys-171 and Lys-181. Arg-183 contacts urate. Residues Lys-217 and Lys-224 each carry the N6-acetyllysine; alternate modification. N6-succinyllysine; alternate is present on residues Lys-217 and Lys-224. A Phosphoserine modification is found at Ser-228. Positions 231, 232, and 258 each coordinate urate. Catalysis depends on His-260, which acts as the Charge relay system. Lys-274 is subject to N6-acetyllysine. At Tyr-285 the chain carries Phosphotyrosine. Residues 298–300 (SRL) carry the Microbody targeting signal motif.

It belongs to the uricase family.

The protein localises to the peroxisome. The enzyme catalyses urate + O2 + H2O = 5-hydroxyisourate + H2O2. It functions in the pathway purine metabolism; urate degradation; (S)-allantoin from urate: step 1/3. In terms of biological role, catalyzes the oxidation of uric acid to 5-hydroxyisourate, which is further processed to form (S)-allantoin. The sequence is that of Uricase (UOX) from Oryctolagus cuniculus (Rabbit).